The chain runs to 209 residues: MAELSTLARPYAKAAFDYAHENSVIGEWEDFLFIASSVVGDSAFVQMLENPAITAEQKADMLVSIYDEQVTSTEETPLKSLLLSTQSHTDEAQSNQALPAATPQIKNFVHQLAEQERLSLIPQVYEQFRLHRAQALKQVNAYVTSAYPLSETQRVMIQKRLEESLKASVIIHEDVDPSLLAGATVKIGDKLVDDSVRGKLKQLKTQLTA.

Belongs to the ATPase delta chain family. F-type ATPases have 2 components, F(1) - the catalytic core - and F(0) - the membrane proton channel. F(1) has five subunits: alpha(3), beta(3), gamma(1), delta(1), epsilon(1). F(0) has three main subunits: a(1), b(2) and c(10-14). The alpha and beta chains form an alternating ring which encloses part of the gamma chain. F(1) is attached to F(0) by a central stalk formed by the gamma and epsilon chains, while a peripheral stalk is formed by the delta and b chains.

It is found in the cell inner membrane. Its function is as follows. F(1)F(0) ATP synthase produces ATP from ADP in the presence of a proton or sodium gradient. F-type ATPases consist of two structural domains, F(1) containing the extramembraneous catalytic core and F(0) containing the membrane proton channel, linked together by a central stalk and a peripheral stalk. During catalysis, ATP synthesis in the catalytic domain of F(1) is coupled via a rotary mechanism of the central stalk subunits to proton translocation. This protein is part of the stalk that links CF(0) to CF(1). It either transmits conformational changes from CF(0) to CF(1) or is implicated in proton conduction. The protein is ATP synthase subunit delta of Psychrobacter sp. (strain PRwf-1).